The sequence spans 419 residues: D-mannonate dehydratase (419 aa).

The substrate site is built by Asn-54 and His-139. Tyr-176 serves as the catalytic Proton donor/acceptor. Asp-227 is a binding site for Mg(2+). His-229 serves as the catalytic Proton donor/acceptor. Positions 253 and 279 each coordinate Mg(2+). Substrate is bound by residues Glu-279, Arg-300, His-329, Asp-333, and Glu-356.

It belongs to the mandelate racemase/muconate lactonizing enzyme family. GalD subfamily. Requires Mg(2+) as cofactor.

It carries out the reaction D-mannonate = 2-dehydro-3-deoxy-D-gluconate + H2O. The protein operates within carbohydrate metabolism; pentose and glucuronate interconversion. Catalyzes the dehydration of D-mannonate. Has no detectable activity with a panel of 70 other acid sugars (in vitro). This is D-mannonate dehydratase from Xanthomonas oryzae pv. oryzicola (strain BLS256).